We begin with the raw amino-acid sequence, 149 residues long: Cell division protein SepF (149 aa).

The disordered stretch occupies residues 12-57 (SNEEDDYYEEDGYEQSQQQEQQTTQQTSSQPRFVRQTTQSQTPAGL). Positions 13–24 (NEEDDYYEEDGY) are enriched in acidic residues. The span at 25–41 (EQSQQQEQQTTQQTSSQ) shows a compositional bias: low complexity. A compositionally biased stretch (polar residues) spans 46–57 (RQTTQSQTPAGL).

Belongs to the SepF family. As to quaternary structure, homodimer. Interacts with FtsZ.

Its subcellular location is the cytoplasm. Cell division protein that is part of the divisome complex and is recruited early to the Z-ring. Probably stimulates Z-ring formation, perhaps through the cross-linking of FtsZ protofilaments. Its function overlaps with FtsA. The chain is Cell division protein SepF from Leuconostoc mesenteroides subsp. mesenteroides (strain ATCC 8293 / DSM 20343 / BCRC 11652 / CCM 1803 / JCM 6124 / NCDO 523 / NBRC 100496 / NCIMB 8023 / NCTC 12954 / NRRL B-1118 / 37Y).